Consider the following 362-residue polypeptide: Alanine racemase (362 aa).

Lys33 acts as the Proton acceptor; specific for D-alanine in catalysis. Lys33 carries the post-translational modification N6-(pyridoxal phosphate)lysine. Arg129 is a substrate binding site. Tyr254 serves as the catalytic Proton acceptor; specific for L-alanine. Met302 contacts substrate.

It belongs to the alanine racemase family. It depends on pyridoxal 5'-phosphate as a cofactor.

It carries out the reaction L-alanine = D-alanine. Its pathway is amino-acid biosynthesis; D-alanine biosynthesis; D-alanine from L-alanine: step 1/1. In terms of biological role, catalyzes the interconversion of L-alanine and D-alanine. May also act on other amino acids. The protein is Alanine racemase (alr) of Xylella fastidiosa (strain 9a5c).